The primary structure comprises 362 residues: 3-dehydroquinate synthase (362 aa).

Residues 74-79 (DGEEHK), 108-112 (GVTGD), 132-133 (TT), K145, and K154 each bind NAD(+). Zn(2+)-binding residues include E187, H250, and H267.

The protein belongs to the sugar phosphate cyclases superfamily. Dehydroquinate synthase family. Requires Co(2+) as cofactor. The cofactor is Zn(2+). It depends on NAD(+) as a cofactor.

It is found in the cytoplasm. The catalysed reaction is 7-phospho-2-dehydro-3-deoxy-D-arabino-heptonate = 3-dehydroquinate + phosphate. It functions in the pathway metabolic intermediate biosynthesis; chorismate biosynthesis; chorismate from D-erythrose 4-phosphate and phosphoenolpyruvate: step 2/7. Catalyzes the conversion of 3-deoxy-D-arabino-heptulosonate 7-phosphate (DAHP) to dehydroquinate (DHQ). This is 3-dehydroquinate synthase from Syntrophotalea carbinolica (strain DSM 2380 / NBRC 103641 / GraBd1) (Pelobacter carbinolicus).